Here is a 274-residue protein sequence, read N- to C-terminus: uncharacterized protein (274 aa).

This is an uncharacterized protein from Invertebrate iridescent virus 6 (IIV-6).